Here is a 101-residue protein sequence, read N- to C-terminus: MEPVDPRLEPWKHPGSQPKTASNNCYCKRCCLHCQVCFTKKGLGISYGRKKRRQRRRAPQDSKTHQVSLSKQPASQPRGDPTGPKESKKKVERETETDPED.

Residues 1 to 12 (MEPVDPRLEPWK) show a composition bias toward basic and acidic residues. Residues 1–24 (MEPVDPRLEPWKHPGSQPKTASNN) are disordered. An interaction with human CREBBP region spans residues 1-24 (MEPVDPRLEPWKHPGSQPKTASNN). The interval 1 to 48 (MEPVDPRLEPWKHPGSQPKTASNNCYCKRCCLHCQVCFTKKGLGISYG) is transactivation. The cysteine-rich stretch occupies residues 22–37 (SNNCYCKRCCLHCQVC). Zn(2+) is bound by residues cysteine 25 and cysteine 27. N6-acetyllysine; by host PCAF is present on lysine 28. 4 residues coordinate Zn(2+): cysteine 30, histidine 33, cysteine 34, and cysteine 37. The segment at 38 to 48 (FTKKGLGISYG) is core. Positions 45–101 (ISYGRKKRRQRRRAPQDSKTHQVSLSKQPASQPRGDPTGPKESKKKVERETETDPED) are disordered. The span at 48–57 (GRKKRRQRRR) shows a compositional bias: basic residues. The short motif at 49–57 (RKKRRQRRR) is the Nuclear localization signal, RNA-binding (TAR), and protein transduction element. An interaction with the host capping enzyme RNGTT region spans residues 49–86 (RKKRRQRRRAPQDSKTHQVSLSKQPASQPRGDPTGPKE). N6-acetyllysine; by host EP300 and GCN5L2 occurs at positions 50 and 51. Arginine 52 and arginine 53 each carry asymmetric dimethylarginine; by host PRMT6. Residues 65–75 (HQVSLSKQPAS) are compositionally biased toward polar residues. A Glycyl lysine isopeptide (Lys-Gly) (interchain with G-Cter in ubiquitin) cross-link involves residue lysine 71. Residues 78-80 (RGD) carry the Cell attachment site motif. A compositionally biased stretch (basic and acidic residues) spans 83–101 (GPKESKKKVERETETDPED).

The protein belongs to the lentiviruses Tat family. In terms of assembly, interacts with host CCNT1. Associates with the P-TEFb complex composed at least of Tat, P-TEFb (CDK9 and CCNT1), TAR RNA, RNA Pol II. Recruits the HATs CREBBP, TAF1/TFIID, EP300, PCAF and GCN5L2. Interacts with host KAT5/Tip60; this interaction targets the latter to degradation. Interacts with the host deacetylase SIRT1. Interacts with host capping enzyme RNGTT; this interaction stimulates RNGTT. Binds to host KDR, and to the host integrins ITGAV/ITGB3 and ITGA5/ITGB1. Interacts with host KPNB1/importin beta-1 without previous binding to KPNA1/importin alpha-1. Interacts with EIF2AK2. Interacts with host nucleosome assembly protein NAP1L1; this interaction may be required for the transport of Tat within the nucleus, since the two proteins interact at the nuclear rim. Interacts with host C1QBP/SF2P32; this interaction involves lysine-acetylated Tat. Interacts with the host chemokine receptors CCR2, CCR3 and CXCR4. Interacts with host DPP4/CD26; this interaction may trigger an anti-proliferative effect. Interacts with host LDLR. Interacts with the host extracellular matrix metalloproteinase MMP1. Interacts with host PRMT6; this interaction mediates Tat's methylation. Interacts with, and is ubiquitinated by MDM2/Hdm2. Interacts with host PSMC3 and HTATIP2. Interacts with STAB1; this interaction may overcome SATB1-mediated repression of IL2 and IL2RA (interleukin) in T cells by binding to the same domain than HDAC1. Interacts (when acetylated) with human CDK13, thereby increasing HIV-1 mRNA splicing and promoting the production of the doubly spliced HIV-1 protein Nef. Interacts with host TBP; this interaction modulates the activity of transcriptional pre-initiation complex. Interacts with host RELA. Interacts with host PLSCR1; this interaction negatively regulates Tat transactivation activity by altering its subcellular distribution. In terms of processing, asymmetrical arginine methylation by host PRMT6 seems to diminish the transactivation capacity of Tat and affects the interaction with host CCNT1. Acetylation by EP300, CREBBP, GCN5L2/GCN5 and PCAF regulates the transactivation activity of Tat. EP300-mediated acetylation of Lys-50 promotes dissociation of Tat from the TAR RNA through the competitive binding to PCAF's bromodomain. In addition, the non-acetylated Tat's N-terminus can also interact with PCAF. PCAF-mediated acetylation of Lys-28 enhances Tat's binding to CCNT1. Lys-50 is deacetylated by SIRT1. Post-translationally, polyubiquitination by host MDM2 does not target Tat to degradation, but activates its transactivation function and fosters interaction with CCNT1 and TAR RNA. In terms of processing, phosphorylated by EIF2AK2 on serine and threonine residues adjacent to the basic region important for TAR RNA binding and function. Phosphorylation of Tat by EIF2AK2 is dependent on the prior activation of EIF2AK2 by dsRNA.

The protein resides in the host nucleus. The protein localises to the host nucleolus. It is found in the host cytoplasm. Its subcellular location is the secreted. In terms of biological role, transcriptional activator that increases RNA Pol II processivity, thereby increasing the level of full-length viral transcripts. Recognizes a hairpin structure at the 5'-LTR of the nascent viral mRNAs referred to as the transactivation responsive RNA element (TAR) and recruits the cyclin T1-CDK9 complex (P-TEFb complex) that will in turn hyperphosphorylate the RNA polymerase II to allow efficient elongation. The CDK9 component of P-TEFb and other Tat-activated kinases hyperphosphorylate the C-terminus of RNA Pol II that becomes stabilized and much more processive. Other factors such as HTATSF1/Tat-SF1, SUPT5H/SPT5, and HTATIP2 are also important for Tat's function. Besides its effect on RNA Pol II processivity, Tat induces chromatin remodeling of proviral genes by recruiting the histone acetyltransferases (HATs) CREBBP, EP300 and PCAF to the chromatin. This also contributes to the increase in proviral transcription rate, especially when the provirus integrates in transcriptionally silent region of the host genome. To ensure maximal activation of the LTR, Tat mediates nuclear translocation of NF-kappa-B by interacting with host RELA. Through its interaction with host TBP, Tat may also modulate transcription initiation. Tat can reactivate a latently infected cell by penetrating in it and transactivating its LTR promoter. In the cytoplasm, Tat is thought to act as a translational activator of HIV-1 mRNAs. Extracellular circulating Tat can be endocytosed by surrounding uninfected cells via the binding to several surface receptors such as CD26, CXCR4, heparan sulfate proteoglycans (HSPG) or LDLR. Neurons are rarely infected, but they internalize Tat via their LDLR. Through its interaction with nuclear HATs, Tat is potentially able to control the acetylation-dependent cellular gene expression. Modulates the expression of many cellular genes involved in cell survival, proliferation or in coding for cytokines or cytokine receptors. Tat plays a role in T-cell and neurons apoptosis. Tat induced neurotoxicity and apoptosis probably contribute to neuroAIDS. Circulating Tat also acts as a chemokine-like and/or growth factor-like molecule that binds to specific receptors on the surface of the cells, affecting many cellular pathways. In the vascular system, Tat binds to ITGAV/ITGB3 and ITGA5/ITGB1 integrins dimers at the surface of endothelial cells and competes with bFGF for heparin-binding sites, leading to an excess of soluble bFGF. The chain is Protein Tat from Homo sapiens (Human).